The chain runs to 529 residues: Arginine--tRNA ligase (529 aa).

Positions 113 to 123 (ANPTGPLHIGH) match the 'HIGH' region motif.

It belongs to the class-I aminoacyl-tRNA synthetase family. In terms of assembly, monomer.

It localises to the cytoplasm. The enzyme catalyses tRNA(Arg) + L-arginine + ATP = L-arginyl-tRNA(Arg) + AMP + diphosphate. This is Arginine--tRNA ligase from Aliarcobacter butzleri (strain RM4018) (Arcobacter butzleri).